The primary structure comprises 312 residues: Regulation of nuclear pre-mRNA domain-containing protein 1A (312 aa).

The residue at position 2 (serine 2) is an N-acetylserine. The region spanning 2 to 133 (SAFSEAALEK…QLKQALYGDK (132 aa)) is the CID domain. Residues serine 153, serine 156, and serine 285 each carry the phosphoserine modification. Residues 244 to 286 (LADFLRCQKEALAEKEHKLEEYKRKLARVSLVRKELRSRIQSL) are a coiled coil.

Belongs to the UPF0400 (RTT103) family. In terms of assembly, may form a heterodimer with RPRD1B. Associates with the RNA polymerase II subunit POLR2A (via CTD phosphorylated at 'Ser-2' and 'Ser-7' of the heptad repeats).

The protein localises to the nucleus. Its function is as follows. Interacts with phosphorylated C-terminal heptapeptide repeat domain (CTD) of the largest RNA polymerase II subunit POLR2A, and participates in dephosphorylation of the CTD by RPAP2. May act as a negative regulator of cyclin-D1 (CCND1) and cyclin-E (CCNE1) in the cell cycle. This is Regulation of nuclear pre-mRNA domain-containing protein 1A (RPRD1A) from Pongo abelii (Sumatran orangutan).